Consider the following 402-residue polypeptide: Plasminogen activator inhibitor 1 (402 aa).

A signal peptide spans 1-22; that stretch reads MQMSSALACLILGLVLVSGKGF. N-linked (GlcNAc...) asparagine glycans are attached at residues Asn-232, Asn-288, and Asn-352.

This sequence belongs to the serpin family. Forms a heterodimer with TMPRSS7. Interacts with VTN. Binds LRP1B; binding is followed by internalization and degradation. Interacts with PPP1CB. In complex with PLAU/uPA, interacts with PLAUR/uPAR. Interacts with SORL1 and LRP1, either alone or in complex with PLAU; these interactions are abolished in the presence of LRPAP1/RAP. The ternary complex composed of PLAUR-PLAU-PAI1 also interacts with SORL1. Interacts with PLAT/tPA. Also interacts with SORL1, when complexed to PLAT/tPA.

Its subcellular location is the secreted. Functionally, serine protease inhibitor. Inhibits TMPRSS7. Is a primary inhibitor of tissue-type plasminogen activator (PLAT) and urokinase-type plasminogen activator (PLAU). As PLAT inhibitor, it is required for fibrinolysis down-regulation and is responsible for the controlled degradation of blood clots. As PLAU inhibitor, it is involved in the regulation of cell adhesion and spreading. Acts as a regulator of cell migration, independently of its role as protease inhibitor. It is required for stimulation of keratinocyte migration during cutaneous injury repair. Involved in cellular and replicative senescence. Plays a role in alveolar type 2 cells senescence in the lung. Is involved in the regulation of cementogenic differentiation of periodontal ligament stem cells, and regulates odontoblast differentiation and dentin formation during odontogenesis. The sequence is that of Plasminogen activator inhibitor 1 (Serpine1) from Mus musculus (Mouse).